We begin with the raw amino-acid sequence, 191 residues long: Putative glutathione-dependent formaldehyde-activating enzyme (191 aa).

In terms of domain architecture, CENP-V/GFA spans 20-166 (FAGGKLRCHC…FKALGLQTYD (147 aa)). 7 residues coordinate Zn(2+): cysteine 27, cysteine 29, cysteine 48, cysteine 50, cysteine 53, cysteine 95, and cysteine 98.

Belongs to the Gfa family. Requires Zn(2+) as cofactor.

It catalyses the reaction S-(hydroxymethyl)glutathione = glutathione + formaldehyde. The protein operates within one-carbon metabolism; formaldehyde degradation; formate from formaldehyde (glutathione route): step 1/3. Functionally, catalyzes the condensation of formaldehyde and glutathione to S-hydroxymethylglutathione. In Penicillium rubens (strain ATCC 28089 / DSM 1075 / NRRL 1951 / Wisconsin 54-1255) (Penicillium chrysogenum), this protein is Putative glutathione-dependent formaldehyde-activating enzyme.